Here is a 261-residue protein sequence, read N- to C-terminus: Cytochrome c oxidase subunit 3 (261 aa).

The Mitochondrial matrix portion of the chain corresponds to 1–15; the sequence is MTHQTHAYHMVNPSP. The helical transmembrane segment at 16-34 threads the bilayer; that stretch reads WPLTGALSALLMTSGLIMW. At 35-40 the chain is on the mitochondrial intermembrane side; the sequence is FHFNST. Residues 41 to 66 traverse the membrane as a helical segment; it reads TLLMLGLTTNMLTMYQWWRDVVREST. The Mitochondrial matrix portion of the chain corresponds to 67-72; sequence FQGHHT. Residues 73–105 traverse the membrane as a helical segment; it reads PNVQKGLRYGMILFIISEVLFFTGFFWAFYHSS. At 106–128 the chain is on the mitochondrial intermembrane side; the sequence is LAPTPELGGCWPPTGIHPLNPLE. Residues 129–152 form a helical membrane-spanning segment; the sequence is VPLLNTSVLLASGVSITWAHHSLM. The Mitochondrial matrix portion of the chain corresponds to 153–155; sequence EGN. The helical transmembrane segment at 156–183 threads the bilayer; that stretch reads RNHMLQALFITIALGVYFTLLQASEYYE. At 184–190 the chain is on the mitochondrial intermembrane side; sequence APFTISD. Residues 191–223 form a helical membrane-spanning segment; sequence GVYGSTFFVATGFHGLHVIIGSTFLIVCFFRQL. The Mitochondrial matrix portion of the chain corresponds to 224 to 232; sequence KFHFTSNHH. Residues 233 to 256 form a helical membrane-spanning segment; that stretch reads FGFEAAAWYWHFVDVVWLFLYVSI. The Mitochondrial intermembrane segment spans residues 257-261; the sequence is YWWGS.

It belongs to the cytochrome c oxidase subunit 3 family. As to quaternary structure, component of the cytochrome c oxidase (complex IV, CIV), a multisubunit enzyme composed of 14 subunits. The complex is composed of a catalytic core of 3 subunits MT-CO1, MT-CO2 and MT-CO3, encoded in the mitochondrial DNA, and 11 supernumerary subunits COX4I, COX5A, COX5B, COX6A, COX6B, COX6C, COX7A, COX7B, COX7C, COX8 and NDUFA4, which are encoded in the nuclear genome. The complex exists as a monomer or a dimer and forms supercomplexes (SCs) in the inner mitochondrial membrane with NADH-ubiquinone oxidoreductase (complex I, CI) and ubiquinol-cytochrome c oxidoreductase (cytochrome b-c1 complex, complex III, CIII), resulting in different assemblies (supercomplex SCI(1)III(2)IV(1) and megacomplex MCI(2)III(2)IV(2)).

Its subcellular location is the mitochondrion inner membrane. It catalyses the reaction 4 Fe(II)-[cytochrome c] + O2 + 8 H(+)(in) = 4 Fe(III)-[cytochrome c] + 2 H2O + 4 H(+)(out). Functionally, component of the cytochrome c oxidase, the last enzyme in the mitochondrial electron transport chain which drives oxidative phosphorylation. The respiratory chain contains 3 multisubunit complexes succinate dehydrogenase (complex II, CII), ubiquinol-cytochrome c oxidoreductase (cytochrome b-c1 complex, complex III, CIII) and cytochrome c oxidase (complex IV, CIV), that cooperate to transfer electrons derived from NADH and succinate to molecular oxygen, creating an electrochemical gradient over the inner membrane that drives transmembrane transport and the ATP synthase. Cytochrome c oxidase is the component of the respiratory chain that catalyzes the reduction of oxygen to water. Electrons originating from reduced cytochrome c in the intermembrane space (IMS) are transferred via the dinuclear copper A center (CU(A)) of subunit 2 and heme A of subunit 1 to the active site in subunit 1, a binuclear center (BNC) formed by heme A3 and copper B (CU(B)). The BNC reduces molecular oxygen to 2 water molecules using 4 electrons from cytochrome c in the IMS and 4 protons from the mitochondrial matrix. This is Cytochrome c oxidase subunit 3 (MT-CO3) from Gazella cuvieri (Cuvier's gazelle).